Reading from the N-terminus, the 479-residue chain is Serine carboxypeptidase-like 44 (479 aa).

An N-terminal signal peptide occupies residues 1–22 (MVGGKWRFLEVAVVVMVLQWSC). Cystine bridges form between Cys-92–Cys-352, Cys-253–Cys-270, and Cys-295–Cys-320. An N-linked (GlcNAc...) asparagine glycan is attached at Asn-143. Ser-184 is a catalytic residue. Asn-265 is a glycosylation site (N-linked (GlcNAc...) asparagine). Asn-341 carries N-linked (GlcNAc...) asparagine glycosylation. The active site involves Asp-389. Residue Asn-411 is glycosylated (N-linked (GlcNAc...) asparagine). The active site involves His-446.

It belongs to the peptidase S10 family. Expressed in seedlings.

The protein localises to the secreted. Functionally, probable carboxypeptidase. This Arabidopsis thaliana (Mouse-ear cress) protein is Serine carboxypeptidase-like 44 (SCPL44).